Here is a 136-residue protein sequence, read N- to C-terminus: NLP effector protein 13 (136 aa).

The short motif at 1 to 9 (MYSWYFPKD) is the Conserved undecapeptide motif I element. The Hepta-peptide GHRHDWE motif II signature appears at 16 to 22 (GHRHDWE).

The protein belongs to the Necrosis inducing protein (NPP1) family.

It is found in the secreted. Its function is as follows. Secreted effector that contributes moderately to virulence during infection by P.capsici. Causes only small yellow areas at 3 days after inoculation of host C.annuum leaves; these areas expand somewhat and became necrotic at 7 days after inoculation. Leads only to chlorotic areas, without necrosis at 7 days after non-host N.benthamiana leaves infection. The chain is NLP effector protein 13 from Phytophthora capsici.